A 196-amino-acid polypeptide reads, in one-letter code: Pro-FMRFamide-related neuropeptide VF (196 aa).

The N-terminal stretch at 1–21 (MEIISLKRFILLMLATSSLLT) is a signal peptide. Residues 22-57 (SNIFCTDESRMPNLYSKKNYDKYSEPRGDLGWEKER) constitute a propeptide that is removed on maturation. At F92 the chain carries Phenylalanine amide. 2 propeptides span residues 95 to 99 (NMEEE) and 115 to 121 (NREDSLS). A Phenylalanine amide modification is found at F131. The propeptide occupies 134–196 (TTTAKSITKT…IDDAELKQEK (63 aa)).

Belongs to the FARP (FMRFamide related peptide) family.

Its subcellular location is the secreted. In terms of biological role, efficiently inhibits forskolin-induced production of cAMP. Acts as a potent negative regulator of gonadotropin synthesis and secretion. Induces secretion of prolactin. Its function is as follows. Efficiently inhibits forskolin-induced production of cAMP. Blocks morphine-induced analgesia. Shows no inhibitory activity of forskolin-induced production of cAMP. The sequence is that of Pro-FMRFamide-related neuropeptide VF (NPVF) from Bos taurus (Bovine).